A 448-amino-acid polypeptide reads, in one-letter code: UDP-N-acetylglucosamine--dolichyl-phosphate N-acetylglucosaminephosphotransferase (448 aa).

A helical membrane pass occupies residues A24–P44. UDP-N-acetyl-alpha-D-glucosamine-binding positions include K58–L60 and E70. A run of 2 helical transmembrane segments spans residues I72–F92 and Y129–F149. Dolichyl phosphate is bound at residue K156. A run of 2 helical transmembrane segments spans residues F157–V177 and Y202–V222. Dolichyl phosphate is bound at residue I210–I218. Residue N217 coordinates Mg(2+). N223 is a UDP-N-acetyl-alpha-D-glucosamine binding site. 4 helical membrane passes run I231 to A251, H256 to W276, V283 to L303, and T309 to F329. Mg(2+) is bound at residue D287. R336–R338 provides a ligand contact to UDP-N-acetyl-alpha-D-glucosamine. 2 helical membrane-spanning segments follow: residues E387–M407 and L419–F439.

The protein belongs to the glycosyltransferase 4 family. The cofactor is Mg(2+).

It is found in the endoplasmic reticulum membrane. The enzyme catalyses a di-trans,poly-cis-dolichyl phosphate + UDP-N-acetyl-alpha-D-glucosamine = an N-acetyl-alpha-D-glucosaminyl-diphospho-di-trans,poly-cis-dolichol + UMP. Its pathway is protein modification; protein glycosylation. Its activity is regulated as follows. Inhibited by natural nucleoside antibiotic tunicamycin, which acts as a structural analog and competitor of UDP-GlcNAc. In terms of biological role, UDP-N-acetylglucosamine--dolichyl-phosphate N-acetylglucosaminephosphotransferase that operates in the biosynthetic pathway of dolichol-linked oligosaccharides, the glycan precursors employed in protein asparagine (N)-glycosylation. The assembly of dolichol-linked oligosaccharides begins on the cytosolic side of the endoplasmic reticulum membrane and finishes in its lumen. The sequential addition of sugars to dolichol pyrophosphate produces dolichol-linked oligosaccharides containing fourteen sugars, including two GlcNAcs, nine mannoses and three glucoses. Once assembled, the oligosaccharide is transferred from the lipid to nascent proteins by oligosaccharyltransferases. Catalyzes the initial step of dolichol-linked oligosaccharide biosynthesis, transfering GlcNAc-1-P from cytosolic UDP-GlcNAc onto the carrier lipid dolichyl phosphate (P-dolichol), yielding GlcNAc-P-P-dolichol embedded in the cytoplasmic leaflet of the endoplasmic reticulum membrane. The sequence is that of UDP-N-acetylglucosamine--dolichyl-phosphate N-acetylglucosaminephosphotransferase (ALG7) from Saccharomyces cerevisiae (strain ATCC 204508 / S288c) (Baker's yeast).